A 284-amino-acid polypeptide reads, in one-letter code: Putative xyloglucan endotransglucosylase/hydrolase protein 13 (284 aa).

The signal sequence occupies residues methionine 1–glycine 24. Residues serine 25–tyrosine 214 form the GH16 domain. The active-site Nucleophile is glutamate 100. The active-site Proton donor is glutamate 104. Glutamate 104 serves as a coordination point for xyloglucan. Asparagine 108 carries N-linked (GlcNAc...) asparagine glycosylation. Residues histidine 117–asparagine 119, asparagine 127–glutamate 129, aspartate 193–tryptophan 194, and glycine 198 each bind xyloglucan. 2 cysteine pairs are disulfide-bonded: cysteine 223–cysteine 234 and cysteine 267–cysteine 281. Xyloglucan is bound at residue arginine 272.

This sequence belongs to the glycosyl hydrolase 16 family. XTH group 2 subfamily. In terms of processing, contains at least one intrachain disulfide bond essential for its enzymatic activity.

The protein localises to the secreted. The protein resides in the cell wall. It localises to the extracellular space. Its subcellular location is the apoplast. It catalyses the reaction breaks a beta-(1-&gt;4) bond in the backbone of a xyloglucan and transfers the xyloglucanyl segment on to O-4 of the non-reducing terminal glucose residue of an acceptor, which can be a xyloglucan or an oligosaccharide of xyloglucan.. Its function is as follows. May catalyze xyloglucan endohydrolysis (XEH) and/or endotransglycosylation (XET). Cleaves and religates xyloglucan polymers, an essential constituent of the primary cell wall, and thereby participates in cell wall construction of growing tissues. The protein is Putative xyloglucan endotransglucosylase/hydrolase protein 13 (XTH13) of Arabidopsis thaliana (Mouse-ear cress).